The following is a 582-amino-acid chain: RVSIYSARRPLLARTHIQGRVYNFLERPTGWKCFVYHFAVFLIVLVCLIFSVLSTIEQYVALATGTLFWMEIVLVVFFGTEYVVRLWSAGCRSKYVGVWGRLRFARKPISIIDLIVVLASMVVLCVGSKGQVFATSAIRGIRFLQILRMLHVDRQGGTWRLLGSVVFIHRQELITTLYIGFLGLIFSSYFVYLAEKDAVNESGQVEFGSYADALWWGVVTVTTIGYGDKVPQTWVGKTIASCFSVFAISFFALPAGILGSGFALKVQQKQRQKHFNRQIPAAASLIQTAWRCYAAENPESSTWNIYVRKPTRSHTLLSPSPKPKKSVMVKKKKFKLDKDNGVSPGEKTLTVPHITCEPVSEKRRPDHFSVDTCDSSVKSPMLLEVSTTHFLRTNSVAEDLDLEGETPLVPITHVSQLREHHRATIKVIRRMQYFVAKKKFQQARKPYDVRDVIEQYSQGHLNLMVRIKELQRRLDQSIGKPSLFISVSEKSKDRGSNTIGARLNRVEDKVAQLDQRLVLITDMLQQLLSLHHGGPPGSRPPSGGGAQVQPCGPTNPELFLPGNALPTYEQLTVPRRGPEEGS.

The Cytoplasmic portion of the chain corresponds to 1-31 (RVSIYSARRPLLARTHIQGRVYNFLERPTGW). A helical transmembrane segment spans residues 32–53 (KCFVYHFAVFLIVLVCLIFSVL). Topologically, residues 54–64 (STIEQYVALAT) are extracellular. A helical transmembrane segment spans residues 65–87 (GTLFWMEIVLVVFFGTEYVVRLW). At 88-103 (SAGCRSKYVGVWGRLR) the chain is on the cytoplasmic side. Residues 104 to 129 (FARKPISIIDLIVVLASMVVLCVGSK) form a helical membrane-spanning segment. Topologically, residues 130 to 137 (GQVFATSA) are extracellular. The helical; Voltage-sensor transmembrane segment at 138-153 (IRGIRFLQILRMLHVD) threads the bilayer. Residues 149–157 (MLHVDRQGG) form an interaction with KCNE3 region. Residues 154 to 171 (RQGGTWRLLGSVVFIHRQ) lie on the Cytoplasmic side of the membrane. Gln-155 contributes to the a 1,2-diacyl-sn-glycero-3-phospho-(1D-myo-inositol-4,5-bisphosphate) binding site. The chain crosses the membrane as a helical span at residues 172–194 (ELITTLYIGFLGLIFSSYFVYLA). Topologically, residues 195 to 210 (EKDAVNESGQVEFGSY) are extracellular. An N-linked (GlcNAc...) asparagine glycan is attached at Asn-200. The pore-forming intramembrane region spans 211–231 (ADALWWGVVTVTTIGYGDKVP). At 232-233 (QT) the chain is on the extracellular side. A helical transmembrane segment spans residues 234-259 (WVGKTIASCFSVFAISFFALPAGILG). The Cytoplasmic segment spans residues 260-582 (SGFALKVQQK…VPRRGPEEGS (323 aa)). The tract at residues 281 to 293 (AAASLIQTAWRCY) is interaction with CALM. Residues Ser-318 and Ser-320 each carry the phosphoserine modification. Residues 426-440 (KVIRRMQYFVAKKKF) are interaction with CALM; calcium-dependent. The tract at residues 446-483 (PYDVRDVIEQYSQGHLNLMVRIKELQRRLDQSIGKPSL) is interaction with KCNE1 C-terminus. A coiled-coil region spans residues 496–532 (SNTIGARLNRVEDKVAQLDQRLVLITDMLQQLLSLHH). Positions 499-527 (IGARLNRVEDKVAQLDQRLVLITDMLQQL) are interaction with AKAP9. Residues 500-531 (GARLNRVEDKVAQLDQRLVLITDMLQQLLSLH) form a C-terminal assembly domain (tetramerization) region. The interval 530-582 (LHHGGPPGSRPPSGGGAQVQPCGPTNPELFLPGNALPTYEQLTVPRRGPEEGS) is disordered.

Belongs to the potassium channel family. KQT (TC 1.A.1.15) subfamily. Kv7.1/KCNQ1 sub-subfamily. Tetramer. Heterotetramer with KCNE1; targets to the membrane raft. Interacts (via C-terminus) with CALM; forms a heterooctameric structure (with 4:4 KCNQ1:CALM stoichiometry) in a calcium-independent manner. Interacts with AKAP9; targets protein kinase A (PKA) catalytic and regulatory subunits and protein phosphatase 1 (PP1) to the KCNQ1-KCNE1 complex, allowing PKA-mediated phosphorylation and increase of delayed rectifier potassium channel activity. Interacts with KCNE2; form a heterooligomer complex that targets to the membrane raft and leading to currents with an apparently instantaneous activation, a rapid deactivation process and a linear current-voltage relationship and decreases the amplitude of the outward current. Interacts with AP2M1; mediates estrogen-induced internalization via clathrin-coated vesicles. Interacts with NEDD4L; promotes internalization and decreases I(Ks) currents. Interacts with USP2; counteracts the NEDD4L-specific down-regulation of I(Ks) and restore plasma membrane localization. Heterotetramer with KCNQ5; has a voltage-gated potassium channel activity. Interacts with KCNE3; four KCNE3 molecules are bound to one KCNQ1 tetramer (4:4 KCNQ1:KCNE3 stoichiometry); alters membrane raft localization; affects KCNQ1 structure and gating properties. Interacts with KCNE4; impairs KCNQ1 localization in lipid rafts and inhibits voltage-gated potassium channel activity. Interacts with KCNE5; impairs KCNQ1 localization in lipid rafts and only conducts current upon strong and continued depolarization. Post-translationally, phosphorylated by PKA; increases delayed rectifier potassium channel activity of the KCNQ1-KCNE1 complex through a macromolecular complex that includes PKA, PP1, and the targeting protein AKAP9. In terms of processing, ubiquitinated by NEDD4L; promotes internalization. The ubiquitinylated form is internalized through a clathrin-mediated endocytosis by interacting with AP2M1 and is recycled back to the cell membrane via RAB4A and RAB11A. Deubiquitinated by USP2; counteracts the NEDD4L-specific down-regulation of I(Ks) and restores the membrane localization.

The protein resides in the cell membrane. Its subcellular location is the cytoplasmic vesicle membrane. The protein localises to the early endosome. It is found in the membrane raft. It localises to the endoplasmic reticulum. The protein resides in the basolateral cell membrane. It catalyses the reaction K(+)(in) = K(+)(out). PIP2 molecule is essential to activate KCNQ channels by inducing the coupling of the voltage-sensing domain (VSD) and the pore-forming domain (PD). Upon channel activation, PIP2 disrupts the VSD-calmodulin/CALM interactions, causing the release of CALM from the VSD which triggers the opening of the gate. Calcium potentiates KCNQ1 channel current through calcium-bound CALM. Calcium-bound CALM competes with PIP2 to stabilize the channel open state. In terms of biological role, pore-forming subunit of the voltage-gated potassium (Kv) channel involved in the regulation of cardiomyocyte excitability and important in normal development and functions of myocardium, inner ear, stomach and colon. Associates with KCNE beta subunits that modulates current kinetics. Induces a voltage-dependent by rapidly activating and slowly deactivating potassium-selective outward current. Also promotes a delayed voltage activated potassium current showing outward rectification characteristic. During beta-adrenergic receptor stimulation participates in cardiac repolarization by associating with KCNE1 to form the I(Ks) cardiac potassium current that increases the amplitude and slows down the activation kinetics of outward potassium current I(Ks). Muscarinic agonist oxotremorine-M strongly suppresses KCNQ1/KCNE1 current. When associated with KCNE3, forms the potassium channel that is important for cyclic AMP-stimulated intestinal secretion of chloride ions. This interaction with KCNE3 is reduced by 17beta-estradiol, resulting in the reduction of currents. During conditions of increased substrate load, maintains the driving force for proximal tubular and intestinal sodium ions absorption, gastric acid secretion, and cAMP-induced jejunal chloride ions secretion. Allows the provision of potassium ions to the luminal membrane of the secretory canaliculus in the resting state as well as during stimulated acid secretion. When associated with KCNE2, forms a heterooligomer complex leading to currents with an apparently instantaneous activation, a rapid deactivation process and a linear current-voltage relationship and decreases the amplitude of the outward current. When associated with KCNE4, inhibits voltage-gated potassium channel activity. When associated with KCNE5, this complex only conducts current upon strong and continued depolarization. Also forms a heterotetramer with KCNQ5 that has a voltage-gated potassium channel activity. Binds with phosphatidylinositol 4,5-bisphosphate. The polypeptide is Potassium voltage-gated channel subfamily KQT member 1 (Felis catus (Cat)).